The primary structure comprises 415 residues: Multifunctional CCA protein (415 aa).

2 residues coordinate ATP: glycine 8 and arginine 11. Glycine 8 and arginine 11 together coordinate CTP. Positions 21 and 23 each coordinate Mg(2+). ATP-binding residues include arginine 91, arginine 143, and arginine 146. Residues arginine 91, arginine 143, and arginine 146 each contribute to the CTP site. The 102-residue stretch at 232–333 folds into the HD domain; sequence TGVHVMMVID…VRLLERCDAL (102 aa).

Belongs to the tRNA nucleotidyltransferase/poly(A) polymerase family. Bacterial CCA-adding enzyme type 1 subfamily. As to quaternary structure, monomer. Can also form homodimers and oligomers. It depends on Mg(2+) as a cofactor. The cofactor is Ni(2+).

It catalyses the reaction a tRNA precursor + 2 CTP + ATP = a tRNA with a 3' CCA end + 3 diphosphate. The enzyme catalyses a tRNA with a 3' CCA end + 2 CTP + ATP = a tRNA with a 3' CCACCA end + 3 diphosphate. Catalyzes the addition and repair of the essential 3'-terminal CCA sequence in tRNAs without using a nucleic acid template. Adds these three nucleotides in the order of C, C, and A to the tRNA nucleotide-73, using CTP and ATP as substrates and producing inorganic pyrophosphate. tRNA 3'-terminal CCA addition is required both for tRNA processing and repair. Also involved in tRNA surveillance by mediating tandem CCA addition to generate a CCACCA at the 3' terminus of unstable tRNAs. While stable tRNAs receive only 3'-terminal CCA, unstable tRNAs are marked with CCACCA and rapidly degraded. This Cupriavidus taiwanensis (strain DSM 17343 / BCRC 17206 / CCUG 44338 / CIP 107171 / LMG 19424 / R1) (Ralstonia taiwanensis (strain LMG 19424)) protein is Multifunctional CCA protein.